The primary structure comprises 237 residues: Probable F-box protein At1g53815 (237 aa).

One can recognise an F-box domain in the interval 41-72 (ISNILSRLPLKSKAKCRCVSKLWSSIIRRPNY).

This chain is Probable F-box protein At1g53815, found in Arabidopsis thaliana (Mouse-ear cress).